A 311-amino-acid chain; its full sequence is MLLVNEKDLVVPGQVLAENEYFPGRGTFKEDNRICSSFVGLVSVRNKKINVIPLQSKYIPKRGDVVIGEITDIRFSMWGLDINSPYTGLLPASEVFGKDKRELESVFDIVDVLLLRVVDVDEVKKVKLGLKGRGLGKFRDGILVYITPTKVPRLIGKRGSMINMVKEKTHCDIVVGQNGVVWIKGEPDMERIAEKVVLMIDREAHTSGLTDRVRELLDRLTGVEPEIQVEESEGTEKPETPESEDFEEASDYSEDVEVSPESEDIEEVSDESEDLEVESEDVEEGTDTPAAEEDDGEAGDAEVKDENNSER.

The S1 motif domain occupies 63–131; it reads GDVVIGEITD…EVKKVKLGLK (69 aa). A KH domain is found at 139 to 197; sequence RDGILVYITPTKVPRLIGKRGSMINMVKEKTHCDIVVGQNGVVWIKGEPDMERIAEKVV. Residues 222-311 are disordered; sequence GVEPEIQVEE…EVKDENNSER (90 aa). Over residues 241-300 the composition is skewed to acidic residues; the sequence is PESEDFEEASDYSEDVEVSPESEDIEEVSDESEDLEVESEDVEEGTDTPAAEEDDGEAGD. Residues 301 to 311 show a composition bias toward basic and acidic residues; sequence AEVKDENNSER.

This sequence belongs to the RRP4 family. Component of the archaeal exosome complex. Forms a trimer of Rrp4 and/or Csl4 subunits. The trimer associates with a hexameric ring-like arrangement composed of 3 Rrp41-Rrp42 heterodimers.

It localises to the cytoplasm. Functionally, non-catalytic component of the exosome, which is a complex involved in RNA degradation. Increases the RNA binding and the efficiency of RNA degradation. Confers strong poly(A) specificity to the exosome. The chain is Exosome complex component Rrp4 from Methanothermobacter thermautotrophicus (strain ATCC 29096 / DSM 1053 / JCM 10044 / NBRC 100330 / Delta H) (Methanobacterium thermoautotrophicum).